A 267-amino-acid polypeptide reads, in one-letter code: Proteasome subunit alpha (267 aa).

Residues E231–D267 are disordered. Residues L234–D267 are compositionally biased toward basic and acidic residues.

This sequence belongs to the peptidase T1A family. In terms of assembly, the 20S proteasome core is composed of 14 alpha and 14 beta subunits that assemble into four stacked heptameric rings, resulting in a barrel-shaped structure. The two inner rings, each composed of seven catalytic beta subunits, are sandwiched by two outer rings, each composed of seven alpha subunits. The catalytic chamber with the active sites is on the inside of the barrel. Has a gated structure, the ends of the cylinder being occluded by the N-termini of the alpha-subunits. Is capped by the proteasome-associated ATPase, ARC.

Its subcellular location is the cytoplasm. It functions in the pathway protein degradation; proteasomal Pup-dependent pathway. With respect to regulation, the formation of the proteasomal ATPase ARC-20S proteasome complex, likely via the docking of the C-termini of ARC into the intersubunit pockets in the alpha-rings, may trigger opening of the gate for substrate entry. Interconversion between the open-gate and close-gate conformations leads to a dynamic regulation of the 20S proteasome proteolysis activity. Component of the proteasome core, a large protease complex with broad specificity involved in protein degradation. In Mycobacterium marinum (strain ATCC BAA-535 / M), this protein is Proteasome subunit alpha.